Consider the following 514-residue polypeptide: Type-2 serine--tRNA ligase (514 aa).

Position 313 (A313) interacts with L-serine. Position 315 (C315) interacts with Zn(2+). R344 provides a ligand contact to L-serine. Residues 344–346 (RWE) and 355–356 (RV) contribute to the ATP site. An L-serine-binding site is contributed by 361 to 363 (RGE). Positions 363 and 470 each coordinate Zn(2+). Position 477 (R477) interacts with ATP.

The protein belongs to the class-II aminoacyl-tRNA synthetase family. Type-2 seryl-tRNA synthetase subfamily. In terms of assembly, homodimer. Requires Zn(2+) as cofactor.

Its subcellular location is the cytoplasm. The catalysed reaction is tRNA(Ser) + L-serine + ATP = L-seryl-tRNA(Ser) + AMP + diphosphate + H(+). It catalyses the reaction tRNA(Sec) + L-serine + ATP = L-seryl-tRNA(Sec) + AMP + diphosphate + H(+). It participates in aminoacyl-tRNA biosynthesis; selenocysteinyl-tRNA(Sec) biosynthesis; L-seryl-tRNA(Sec) from L-serine and tRNA(Sec): step 1/1. Catalyzes the attachment of serine to tRNA(Ser). Is also able to aminoacylate tRNA(Sec) with serine, to form the misacylated tRNA L-seryl-tRNA(Sec), which will be further converted into selenocysteinyl-tRNA(Sec). This is Type-2 serine--tRNA ligase from Methanococcus maripaludis (strain C7 / ATCC BAA-1331).